We begin with the raw amino-acid sequence, 233 residues long: MSNTPIELKGSSFTLSVVHLHDANPEVIRQALEDKIAQAPAFLRHAPVVVNIASVEEEVEWRAINEAIAATGLRIMGVSGCKIPRLKTEIDRAGIPLLTEGKEKAPRPAPSEPTPPPPPVANQITKTRLIDQPVRSGQRIYAPHCDLIVTNHVSAGAELIADGNIHVYGMMRGRALAGAGGDRDAQIFCTHLAAELVSIAGEYWLSDNIPAEFYGKAARLRLGESALTVQPLN.

A disordered region spans residues Leu98–Gln123. Positions Arg107 to Val120 are enriched in pro residues.

The protein belongs to the MinC family. As to quaternary structure, interacts with MinD and FtsZ.

In terms of biological role, cell division inhibitor that blocks the formation of polar Z ring septums. Rapidly oscillates between the poles of the cell to destabilize FtsZ filaments that have formed before they mature into polar Z rings. Prevents FtsZ polymerization. This chain is Probable septum site-determining protein MinC, found in Klebsiella pneumoniae (strain 342).